A 453-amino-acid polypeptide reads, in one-letter code: Ribosomal protein uS12 methylthiotransferase RimO (453 aa).

One can recognise an MTTase N-terminal domain in the interval 4 to 120 (TSVHIVSLGC…IADHLRVLME (117 aa)). [4Fe-4S] cluster contacts are provided by cysteine 13, cysteine 49, cysteine 83, cysteine 161, cysteine 165, and cysteine 168. Residues 147 to 377 (STPPYSAYLK…MEEQAVISHE (231 aa)) form the Radical SAM core domain. The TRAM domain occupies 380–450 (QTLVGSLQEV…DYDLFAEVIS (71 aa)).

This sequence belongs to the methylthiotransferase family. RimO subfamily. [4Fe-4S] cluster is required as a cofactor.

Its subcellular location is the cytoplasm. The enzyme catalyses L-aspartate(89)-[ribosomal protein uS12]-hydrogen + (sulfur carrier)-SH + AH2 + 2 S-adenosyl-L-methionine = 3-methylsulfanyl-L-aspartate(89)-[ribosomal protein uS12]-hydrogen + (sulfur carrier)-H + 5'-deoxyadenosine + L-methionine + A + S-adenosyl-L-homocysteine + 2 H(+). Catalyzes the methylthiolation of an aspartic acid residue of ribosomal protein uS12. The polypeptide is Ribosomal protein uS12 methylthiotransferase RimO (Syntrophus aciditrophicus (strain SB)).